Reading from the N-terminus, the 139-residue chain is MKKAALLNSDISSVVSRLGHTDSLVIGDAGLPIPETTTRIDLALTHNVPTFLQVVSVVTSEMQVEAAILAEEIIEKNPAVHDALLDQLKQLEQHQGNSIALHYVSHEEFKTQSGKSRAIIRSGECSPYANVILCAGVTF.

His20 functions as the Proton donor in the catalytic mechanism. Residues Asp28, His106, and 128–130 each bind substrate; that span reads YAN.

It belongs to the RbsD / FucU family. RbsD subfamily. As to quaternary structure, homodecamer.

It is found in the cytoplasm. It catalyses the reaction beta-D-ribopyranose = beta-D-ribofuranose. Its pathway is carbohydrate metabolism; D-ribose degradation; D-ribose 5-phosphate from beta-D-ribopyranose: step 1/2. Its function is as follows. Catalyzes the interconversion of beta-pyran and beta-furan forms of D-ribose. The protein is D-ribose pyranase of Pectobacterium carotovorum subsp. carotovorum (strain PC1).